We begin with the raw amino-acid sequence, 521 residues long: U4/U6 small nuclear ribonucleoprotein Prp4 (521 aa).

At K26 the chain carries N6-acetyllysine. WD repeat units follow at residues 228–267 (GDDRPISYCHFSPNSKMLATACWSGLCKLWSVPDCNLLHT), 270–317 (GHNT…PVAD), 320–359 (GHTVRVARVMWHPSGRFLGTTCYDRSWRLWDLEAQEEILH), 362–401 (GHSMGVYDIAFHQDGSLAGTGGLDAFGRVWDLRTGRCIMF), 404–443 (GHLKEIYGINFSPNGYHIATGSGDNTCKVWDLRQRRCVYT), 446–486 (AHQN…PLKT), and 489–521 (GHEGKVMGLDISSDGQLIATCSYDRTFKLWMAE).

In terms of assembly, component of the precatalytic spliceosome (spliceosome B complex). Component of the U4/U6-U5 tri-snRNP complex, a building block of the precatalytic spliceosome (spliceosome B complex). The U4/U6-U5 tri-snRNP complex is composed of the U4, U6 and U5 snRNAs and at least PRPF3, PRPF4, PRPF6, PRPF8, PRPF31, SNRNP200, TXNL4A, SNRNP40, SNRPB, SNRPD1, SNRPD2, SNRPD3, SNRPE, SNRPF, SNRPG, DDX23, CD2BP2, PPIH, SNU13, EFTUD2, SART1 and USP39, plus LSM2, LSM3, LSM4, LSM5, LSM6, LSM7 and LSM8. Interacts directly with PRPF18, PPIH and PRPF3. Part of a heteromeric complex containing PPIH, PRPF3 and PRPF4 that is stable in the absence of RNA. Interacts with ERCC6.

It localises to the nucleus. It is found in the nucleus speckle. Functionally, plays a role in pre-mRNA splicing as component of the U4/U6-U5 tri-snRNP complex that is involved in spliceosome assembly, and as component of the precatalytic spliceosome (spliceosome B complex). The chain is U4/U6 small nuclear ribonucleoprotein Prp4 (PRPF4) from Pongo abelii (Sumatran orangutan).